A 189-amino-acid polypeptide reads, in one-letter code: Elongation factor P (189 aa).

It belongs to the elongation factor P family.

It is found in the cytoplasm. Its pathway is protein biosynthesis; polypeptide chain elongation. Its function is as follows. Involved in peptide bond synthesis. Stimulates efficient translation and peptide-bond synthesis on native or reconstituted 70S ribosomes in vitro. Probably functions indirectly by altering the affinity of the ribosome for aminoacyl-tRNA, thus increasing their reactivity as acceptors for peptidyl transferase. The sequence is that of Elongation factor P from Ehrlichia chaffeensis (strain ATCC CRL-10679 / Arkansas).